A 234-amino-acid chain; its full sequence is Adenylate dimethylallyltransferase (234 aa).

It belongs to the isopentenyl transferase family.

It catalyses the reaction dimethylallyl diphosphate + AMP = N(6)-(dimethylallyl)adenosine 5'-phosphate + diphosphate. Transfers dimethylallyl groups to AMP as part of the biosynthesis of cytokinin phytohormones. The protein is Adenylate dimethylallyltransferase (ptz) of Pseudomonas savastanoi (Pseudomonas syringae pv. savastanoi).